A 341-amino-acid chain; its full sequence is Thymidine kinase (341 aa).

ATP is bound at residue 19–26 (GAYGIGKT). Glu-48 functions as the Proton acceptor in the catalytic mechanism. Substrate-binding residues include Tyr-66 and Gln-90. Arg-183 lines the ATP pocket. Arg-189 serves as a coordination point for substrate.

It belongs to the herpesviridae thymidine kinase family. Homodimer.

It carries out the reaction thymidine + ATP = dTMP + ADP + H(+). Catalyzes the transfer of the gamma-phospho group of ATP to thymidine to generate dTMP in the salvage pathway of pyrimidine synthesis. The dTMP serves as a substrate for DNA polymerase during viral DNA replication. Allows the virus to be reactivated and to grow in non-proliferative cells lacking a high concentration of phosphorylated nucleic acid precursors. The sequence is that of Thymidine kinase from Varicella-zoster virus (strain Dumas) (HHV-3).